The primary structure comprises 248 residues: DNA repair protein RecO (248 aa).

Belongs to the RecO family.

Its function is as follows. Involved in DNA repair and RecF pathway recombination. This Rubrobacter xylanophilus (strain DSM 9941 / JCM 11954 / NBRC 16129 / PRD-1) protein is DNA repair protein RecO.